A 95-amino-acid chain; its full sequence is Ascorbate-specific PTS system EIIB component (95 aa).

Positions 1-95 (MENKNLHIIA…EIKQALSKVL (95 aa)) constitute a PTS EIIB type-2 domain. Cys12 functions as the Phosphocysteine intermediate in the catalytic mechanism. Cys12 carries the post-translational modification Phosphocysteine.

It is found in the cytoplasm. It carries out the reaction N(pros)-phospho-L-histidyl-[protein] + L-ascorbate(out) = L-ascorbate 6-phosphate(in) + L-histidyl-[protein]. Its function is as follows. The phosphoenolpyruvate-dependent sugar phosphotransferase system (sugar PTS), a major carbohydrate active transport system, catalyzes the phosphorylation of incoming sugar substrates concomitantly with their translocation across the cell membrane. The enzyme II UlaABC PTS system is involved in ascorbate transport. This chain is Ascorbate-specific PTS system EIIB component (ulaB), found in Mycoplasma pneumoniae (strain ATCC 29342 / M129 / Subtype 1) (Mycoplasmoides pneumoniae).